Consider the following 118-residue polypeptide: Protein YoeF (118 aa).

The chain is Protein YoeF (yoeF) from Escherichia coli (strain K12).